Consider the following 873-residue polypeptide: Sister chromatid cohesion protein PDS5 homolog C (873 aa).

4 HEAT repeats span residues 53–92, 99–136, 149–187, and 189–227; these read NALTPLMKGLVGGKLFKHSDVDVKVAVAACISEITRITAP, DQMKEVFKLIVSSFEDLVDKSSRSYAKRISILETVAKV, ALLIEMFQHFLKAIRDHHSGNVFSSMENIMTLVLEESED, and PSEMLSPILHSVKKDDEISQVSRRLAEQVLSNCASKLKT. The segment covering 266–301 has biased composition (basic and acidic residues); it reads NEKEDSQGHIKRETEVEKAAEISTPERTDAPKDESG. Disordered regions lie at residues 266–611 and 658–873; these read NEKE…LVGS and SPLD…KRKR. Residue Thr289 is modified to Phosphothreonine. The segment covering 303–319 has biased composition (polar residues); that stretch reads SGVSNGVAQQNDSSVDT. Over residues 320-334 the composition is skewed to basic and acidic residues; sequence DSMKKQDDTGAKDEP. The span at 336–348 shows a compositional bias: polar residues; that stretch reads QLDNPRNTDLNNT. Basic and acidic residues-rich tracts occupy residues 349 to 365 and 373 to 394; these read TEEKPDVEHQIEEKENE and DLSKDSDIKEETEPAELLDSKD. 2 stretches are compositionally biased toward polar residues: residues 400–411 and 418–438; these read PVDSSVTAATSS and SVQILPSKTSGDETANVSSPS. The segment covering 456 to 466 has biased composition (basic and acidic residues); sequence KKKESSTEEVK. Low complexity predominate over residues 494–510; it reads KVASSSKTKPTVPPSKK. Composition is skewed to basic and acidic residues over residues 511-526 and 535-555; these read STSETKVAKQSEKKVV and TKPKEEKKKPGRGKAIDEESL. Positions 661-681 are enriched in acidic residues; that stretch reads DESELSQDEEAADQTGQEEDA. Residues 701–725 show a composition bias toward low complexity; the sequence is SSAKKGSGAGSSKAKATPASKSSKT. Residues 726–746 show a composition bias toward basic and acidic residues; the sequence is SQDDKTASKSKDSKEASREEE. Over residues 747–757 the composition is skewed to acidic residues; sequence ASSEEESEEEE. Low complexity-rich tracts occupy residues 795-814 and 822-831; these read KATTSSKSKSGPVKSVPAKS and KSGSASTPAS. The span at 844 to 853 shows a compositional bias: basic and acidic residues; that stretch reads ETPKEPEPAT. Positions 854 to 866 are enriched in low complexity; that stretch reads KAKSGKSQGSQSK.

The protein belongs to the PDS5 family. In terms of assembly, interacts with the cohesin complex.

Its subcellular location is the nucleus. Cohesin cofactor dispensable during the meiotic division but playing an important role in DNA repair by homologous recombination (HR) probably by helping SMC5/SMC6 complex. Regulator of sister chromatid cohesion in mitosis which may stabilize cohesin complex association with chromatin. May couple sister chromatid cohesion during mitosis to DNA replication. Cohesion ensures that chromosome partitioning is accurate in both meiotic and mitotic cells and plays an important role in DNA repair. This chain is Sister chromatid cohesion protein PDS5 homolog C, found in Arabidopsis thaliana (Mouse-ear cress).